A 134-amino-acid chain; its full sequence is Natriuretic peptides B (134 aa).

Positions methionine 1–serine 26 are cleaved as a signal peptide. Serine 41 carries O-linked (Xyl...) (chondroitin sulfate) serine glycosylation. Threonine 62 carries O-linked (HexNAc...) threonine; Partial glycosylation. 2 O-linked (HexNAc...) serine glycosylation sites follow: serine 63 and serine 70. O-linked (HexNAc...) threonine glycosylation occurs at threonine 74. O-linked (HexNAc...) serine glycosylation is present at serine 79. Threonine 84 is a glycosylation site (O-linked (HexNAc...) threonine; Partial). O-linked (HexNAc...) threonine glycosylation is present at threonine 97. A disulfide bond links cysteine 112 and cysteine 128.

It belongs to the natriuretic peptide family. Post-translationally, the precursor molecule is proteolytically cleaved by the endoproteases FURIN or CORIN at Arg-102 to produce brain natriuretic peptide 32 and NT-proBNP. This likely occurs after it has been secreted into the blood, either during circulation or in the target cells. CORIN also cleaves the precursor molecule at additional residues including Arg-99 and possibly Lys-105. In patients with heart failure, processing and degradation of natriuretic peptides B occurs but is delayed, possibly due to a decrease in enzyme level or activity of CORIN and DPP4. Undergoes further proteolytic cleavage by various proteases such as DPP4, MME and possibly FAP, to give rise to a variety of shorter peptides. Cleaved at Pro-104 by the prolyl endopeptidase FAP (seprase) activity (in vitro). Degraded by IDE. During IDE degradation, the resulting products initially increase the activation of NPR1 and can also stimulate NPR2 to produce cGMP before the fragments are completely degraded and inactivated by IDE (in vitro). In terms of processing, O-glycosylated on at least seven residues. In cardiomyocytes, glycosylation at Thr-97 is essential for the stability and processing of the extracellular natriuretic peptides B. Glycosylation, especially at Thr-97, may also be important for brain natriuretic peptide 32 stability and/or extracellular distribution. Glycosylation at Thr-97 appears to inhibit FURIN- or CORIN-mediated proteolytic processing, at least in HEK293 cells. Detected in the cardiac atria (at protein level). Detected in the kidney distal tubular cells (at protein level).

Its subcellular location is the secreted. Its function is as follows. Cardiac hormone that plays a key role in mediating cardio-renal homeostasis. May also function as a paracrine antifibrotic factor in the heart. Acts by specifically binding and stimulating NPR1 to produce cGMP, which in turn activates effector proteins that drive various biological responses. Involved in regulating the extracellular fluid volume and maintaining the fluid-electrolyte balance through natriuresis, diuresis, vasorelaxation, and inhibition of renin and aldosterone secretion. Binds the clearance receptor NPR3. In terms of biological role, may affect cardio-renal homeostasis. Able to promote the production of cGMP although its potency is very low compared to brain natriuretic peptide 32. May have a role in cardio-renal homeostasis. Able to promote the production of cGMP. This chain is Natriuretic peptides B (NPPB), found in Homo sapiens (Human).